The sequence spans 1980 residues: Unconventional myosin-IXb (1980 aa).

S2 is subject to N-acetylserine. Residues 15–114 (ATFHLHIYPQ…YYFLLQERNA (100 aa)) form the Ras-associating domain. Residues 146-954 (ADFDDLCNLP…ERQALQERLH (809 aa)) enclose the Myosin motor domain. 239 to 246 (GESGSGKT) is an ATP binding site. A disordered region spans residues 715-736 (GVSSPVTRSHVEELPRGANTPS). Phosphoserine is present on residues S717 and S718. The tract at residues 845–856 (KAEPFFIRCIRS) is actin-binding. Positions 941-1045 (LKETERQALQ…CRGHLQRRSF (105 aa)) are neck or regulatory domain. IQ domains are found at residues 958–978 (LRRILLLQSWFRMVLERRHFV), 981–1001 (KHAALTIQACWRSYRVRRTLE), 1002–1024 (RTRAAVYLQAAWRGYLQRQAYHH), and 1025–1054 (QRHSIIRLQSLCRGHLQRRSFSQMMLEKQK). S1046 carries the phosphoserine modification. The segment at 1046 to 1980 (SQMMLEKQKA…ERAVRGAAEE (935 aa)) is tail. 3 disordered regions span residues 1049 to 1281 (MLEK…HPDT), 1302 to 1380 (SQSL…QGDS), and 1394 to 1449 (DKKP…NRKV). A compositionally biased stretch (polar residues) spans 1097–1106 (TWMNSKSPNG). Phosphoserine occurs at positions 1108, 1115, and 1177. Basic and acidic residues-rich tracts occupy residues 1129–1177 (ESHE…RKAS) and 1186–1195 (EDTKEPREDG). S1220, S1222, S1229, S1237, S1243, and S1247 each carry phosphoserine. Residues 1235-1247 (RVSPVLPSSSLES) are compositionally biased toward low complexity. Over residues 1250–1265 (DEDKGENSTKVQDKPE) the composition is skewed to basic and acidic residues. 3 positions are modified to phosphoserine: S1266, S1268, and S1304. T1319 carries the post-translational modification Phosphothreonine. Phosphoserine is present on residues S1327, S1329, and S1337. Over residues 1327-1344 (SFSTSDVSKLSPVKTSTE) the composition is skewed to polar residues. The segment at 1592–1641 (GHVFASYQVNIPQSCEQCLSYIWLMDKALLCSVCKMTCHKKCVHKIQSYC) adopts a Phorbol-ester/DAG-type zinc-finger fold. At S1649 the chain carries Phosphoserine. Residues 1663–1848 (DSLTSDKASV…MLIKEQMRKY (186 aa)) enclose the Rho-GAP domain. The interval 1699–1704 (AANRTR) is interaction with RHOA. Positions 1841–1861 (IKEQMRKYKVKMEEINHLEAA) form a coiled coil. Residue S1886 is modified to Phosphoserine. The disordered stretch occupies residues 1891 to 1923 (VRTKSPRTPVVQDLEELGALPEEAAGGDEDREK). A coiled-coil region spans residues 1918–1948 (DEDREKEILMERIQSIKEEKEDITYRLPELD). Phosphoserine occurs at positions 1932, 1952, and 1959. The segment covering 1937–1953 (KEDITYRLPELDPRGSD) has biased composition (basic and acidic residues). The interval 1937–1980 (KEDITYRLPELDPRGSDEENLDSETSASTESLLEERAVRGAAEE) is disordered. T1965 carries the phosphothreonine modification. Positions 1969 to 1980 (LEERAVRGAAEE) are enriched in basic and acidic residues.

The protein belongs to the TRAFAC class myosin-kinesin ATPase superfamily. Myosin family. As to quaternary structure, interacts (via IQ domains) with CALM. Interacts with RHOA. Interacts (via Rho-GAP domain) with ROBO1; this inhibits the interaction with RHOA and the stimulation of RHOA GTPase activity, and thereby increases the levels of active RHOA. Expressed in testis, lung, thymus, brain, liver, spleen and heart muscle. Detected in lung, testis, spleen and liver, and at reduced level in different brain regions (at protein level).

It is found in the cytoplasm. The protein resides in the cell cortex. The protein localises to the perinuclear region. Its subcellular location is the cytoskeleton. In terms of biological role, myosins are actin-based motor molecules with ATPase activity. Unconventional myosins serve in intracellular movements. Binds actin with high affinity both in the absence and presence of ATP and its mechanochemical activity is inhibited by calcium ions. Also acts as a GTPase activator for RHOA. Plays a role in the regulation of cell migration via its role as RHOA GTPase activator. This is regulated by its interaction with the SLIT2 receptor ROBO1; interaction with ROBO1 impairs interaction with RHOA and subsequent activation of RHOA GTPase activity, and thereby leads to increased levels of active, GTP-bound RHOA. This Rattus norvegicus (Rat) protein is Unconventional myosin-IXb (Myo9b).